The chain runs to 729 residues: 1,4-alpha-glucan branching enzyme GlgB (729 aa).

Asp405 (nucleophile) is an active-site residue. Glu458 functions as the Proton donor in the catalytic mechanism.

Belongs to the glycosyl hydrolase 13 family. GlgB subfamily. Monomer.

The catalysed reaction is Transfers a segment of a (1-&gt;4)-alpha-D-glucan chain to a primary hydroxy group in a similar glucan chain.. The protein operates within glycan biosynthesis; glycogen biosynthesis. Its function is as follows. Catalyzes the formation of the alpha-1,6-glucosidic linkages in glycogen by scission of a 1,4-alpha-linked oligosaccharide from growing alpha-1,4-glucan chains and the subsequent attachment of the oligosaccharide to the alpha-1,6 position. The polypeptide is 1,4-alpha-glucan branching enzyme GlgB (Mannheimia succiniciproducens (strain KCTC 0769BP / MBEL55E)).